Reading from the N-terminus, the 578-residue chain is Putative diflavin flavoprotein A 2 (578 aa).

A zinc metallo-hydrolase region spans residues 39 to 233 (QQGTTSNSYL…PPPRLYAPAH (195 aa)). One can recognise a Flavodoxin-like domain in the interval 262–404 (VALFYASAYG…AANEFAQALK (143 aa)). Positions 429 to 578 (VNRVVGSLCV…TAIQHRKTSS (150 aa)) are flavodoxin-reductase-like.

The protein in the N-terminal section; belongs to the zinc metallo-hydrolase group 3 family. It in the C-terminal section; belongs to the flavodoxin reductase family. The cofactor is Fe cation.

Functionally, mediates electron transfer from NADH to oxygen, reducing it to water. This modular protein has 3 redox cofactors, in other organisms the same activity requires 2 or 3 proteins. This Thermosynechococcus vestitus (strain NIES-2133 / IAM M-273 / BP-1) protein is Putative diflavin flavoprotein A 2 (dfa2).